The primary structure comprises 330 residues: AH receptor-interacting protein (330 aa).

The PPIase FKBP-type domain occupies 31–121 (GTKATFHYRT…KDPLEGQRHC (91 aa)). Ser-43 is subject to Phosphoserine. TPR repeat units lie at residues 179-212 (VPLI…LKNL), 231-264 (TPLL…YDDN), and 265-298 (VKAY…DPAL).

In terms of assembly, interacts with RET in the pituitary gland; this interaction prevents the formation of the AIP-survivin complex. As to expression, widely expressed. Higher levels seen in the heart, placenta and skeletal muscle. Not expressed in the liver.

It is found in the cytoplasm. Its function is as follows. May play a positive role in AHR-mediated (aromatic hydrocarbon receptor) signaling, possibly by influencing its receptivity for ligand and/or its nuclear targeting. Cellular negative regulator of the hepatitis B virus (HBV) X protein. This is AH receptor-interacting protein (AIP) from Homo sapiens (Human).